The sequence spans 281 residues: ATP synthase gamma chain (281 aa).

This sequence belongs to the ATPase gamma chain family. In terms of assembly, F-type ATPases have 2 components, CF(1) - the catalytic core - and CF(0) - the membrane proton channel. CF(1) has five subunits: alpha(3), beta(3), gamma(1), delta(1), epsilon(1). CF(0) has three main subunits: a, b and c.

Its subcellular location is the cell inner membrane. Functionally, produces ATP from ADP in the presence of a proton gradient across the membrane. The gamma chain is believed to be important in regulating ATPase activity and the flow of protons through the CF(0) complex. The sequence is that of ATP synthase gamma chain from Ehrlichia chaffeensis (strain ATCC CRL-10679 / Arkansas).